Reading from the N-terminus, the 64-residue chain is MMKANELREKSAQQLNEQLLGLLRDQFNLRMQKATGQLGQSHLLSQVKRDIARVKTVLNQQAGK.

The protein belongs to the universal ribosomal protein uL29 family.

The sequence is that of Large ribosomal subunit protein uL29 from Pseudomonas entomophila (strain L48).